Here is a 333-residue protein sequence, read N- to C-terminus: Transaldolase (333 aa).

Lys135 (schiff-base intermediate with substrate) is an active-site residue.

The protein belongs to the transaldolase family. Type 1 subfamily. In terms of assembly, homodimer.

The protein resides in the cytoplasm. It carries out the reaction D-sedoheptulose 7-phosphate + D-glyceraldehyde 3-phosphate = D-erythrose 4-phosphate + beta-D-fructose 6-phosphate. The protein operates within carbohydrate degradation; pentose phosphate pathway; D-glyceraldehyde 3-phosphate and beta-D-fructose 6-phosphate from D-ribose 5-phosphate and D-xylulose 5-phosphate (non-oxidative stage): step 2/3. Its function is as follows. Transaldolase is important for the balance of metabolites in the pentose-phosphate pathway. The protein is Transaldolase of Prochlorococcus marinus (strain MIT 9301).